The primary structure comprises 407 residues: Probable endo-beta-1,4-glucanase celB (407 aa).

The N-terminal stretch at Met1 to Ala18 is a signal peptide. An N-linked (GlcNAc...) asparagine glycan is attached at Asn136. Residue Glu216 is the Nucleophile of the active site. Glu221 serves as the catalytic Proton donor.

The protein belongs to the glycosyl hydrolase 7 (cellulase C) family.

Its subcellular location is the secreted. It carries out the reaction Endohydrolysis of (1-&gt;4)-beta-D-glucosidic linkages in cellulose, lichenin and cereal beta-D-glucans.. In terms of biological role, has endoglucanase activity on substrates containing beta-1,4 glycosidic bonds, like in carboxymethylcellulose (CMC), hydroxyethylcellulose (HEC) and beta-glucan. Involved in the degradation of complex natural cellulosic substrates. The protein is Probable endo-beta-1,4-glucanase celB (celB) of Aspergillus fumigatus (strain ATCC MYA-4609 / CBS 101355 / FGSC A1100 / Af293) (Neosartorya fumigata).